The primary structure comprises 229 residues: Putative N-acetylmannosamine-6-phosphate 2-epimerase (229 aa).

It belongs to the NanE family.

The catalysed reaction is an N-acyl-D-glucosamine 6-phosphate = an N-acyl-D-mannosamine 6-phosphate. Its pathway is amino-sugar metabolism; N-acetylneuraminate degradation; D-fructose 6-phosphate from N-acetylneuraminate: step 3/5. Functionally, converts N-acetylmannosamine-6-phosphate (ManNAc-6-P) to N-acetylglucosamine-6-phosphate (GlcNAc-6-P). The chain is Putative N-acetylmannosamine-6-phosphate 2-epimerase from Escherichia coli O7:K1 (strain IAI39 / ExPEC).